The primary structure comprises 607 residues: Elongation factor 4 (607 aa).

In terms of domain architecture, tr-type G spans 11-193 (EKIRNFSIIA…QIVEKVPAPT (183 aa)). Residues 23–28 (DHGKST) and 140–143 (NKID) each bind GTP.

Belongs to the TRAFAC class translation factor GTPase superfamily. Classic translation factor GTPase family. LepA subfamily.

It is found in the cell membrane. The enzyme catalyses GTP + H2O = GDP + phosphate + H(+). Required for accurate and efficient protein synthesis under certain stress conditions. May act as a fidelity factor of the translation reaction, by catalyzing a one-codon backward translocation of tRNAs on improperly translocated ribosomes. Back-translocation proceeds from a post-translocation (POST) complex to a pre-translocation (PRE) complex, thus giving elongation factor G a second chance to translocate the tRNAs correctly. Binds to ribosomes in a GTP-dependent manner. This chain is Elongation factor 4, found in Streptococcus pneumoniae serotype 19F (strain G54).